The following is a 271-amino-acid chain: Ribosomal RNA small subunit methyltransferase J (271 aa).

S-adenosyl-L-methionine-binding positions include 116-117, 132-133, 168-169, and Asp-190; these read RD, ER, and SS.

It belongs to the methyltransferase superfamily. RsmJ family.

The protein localises to the cytoplasm. It catalyses the reaction guanosine(1516) in 16S rRNA + S-adenosyl-L-methionine = N(2)-methylguanosine(1516) in 16S rRNA + S-adenosyl-L-homocysteine + H(+). Functionally, specifically methylates the guanosine in position 1516 of 16S rRNA. The chain is Ribosomal RNA small subunit methyltransferase J from Shewanella piezotolerans (strain WP3 / JCM 13877).